The following is a 464-amino-acid chain: ATP-dependent protease ATPase subunit HslU (464 aa).

Residues V19, 61-66 (GVGKTE), D278, E342, and R414 each bind ATP.

It belongs to the ClpX chaperone family. HslU subfamily. As to quaternary structure, a double ring-shaped homohexamer of HslV is capped on each side by a ring-shaped HslU homohexamer. The assembly of the HslU/HslV complex is dependent on binding of ATP.

Its subcellular location is the cytoplasm. Its function is as follows. ATPase subunit of a proteasome-like degradation complex; this subunit has chaperone activity. The binding of ATP and its subsequent hydrolysis by HslU are essential for unfolding of protein substrates subsequently hydrolyzed by HslV. HslU recognizes the N-terminal part of its protein substrates and unfolds these before they are guided to HslV for hydrolysis. The polypeptide is ATP-dependent protease ATPase subunit HslU (Halalkalibacterium halodurans (strain ATCC BAA-125 / DSM 18197 / FERM 7344 / JCM 9153 / C-125) (Bacillus halodurans)).